Here is a 335-residue protein sequence, read N- to C-terminus: Dihydroorotate dehydrogenase (quinone) (335 aa).

Residues 58–62 (AGADK) and Thr82 contribute to the FMN site. A substrate-binding site is contributed by Lys62. 107-111 (NRNGF) contributes to the substrate binding site. FMN contacts are provided by Asn135 and Asn168. Asn168 contributes to the substrate binding site. The Nucleophile role is filled by Ser171. Asn173 contributes to the substrate binding site. Residues Lys213 and Gly241 each coordinate FMN. 242 to 243 (NT) is a substrate binding site. Residues Gly264, Gly293, and 314 to 315 (YS) contribute to the FMN site.

This sequence belongs to the dihydroorotate dehydrogenase family. Type 2 subfamily. As to quaternary structure, monomer. FMN serves as cofactor.

The protein localises to the cell membrane. It carries out the reaction (S)-dihydroorotate + a quinone = orotate + a quinol. The protein operates within pyrimidine metabolism; UMP biosynthesis via de novo pathway; orotate from (S)-dihydroorotate (quinone route): step 1/1. Its function is as follows. Catalyzes the conversion of dihydroorotate to orotate with quinone as electron acceptor. This is Dihydroorotate dehydrogenase (quinone) from Actinobacillus pleuropneumoniae serotype 5b (strain L20).